The primary structure comprises 143 residues: Large-conductance mechanosensitive channel (143 aa).

2 consecutive transmembrane segments (helical) span residues 10–30 and 89–109; these read FAVKGNVMDLAVGVIIGGAFS and GSFITVAINFVILAFIIFLMV.

It belongs to the MscL family. Homopentamer.

It is found in the cell inner membrane. In terms of biological role, channel that opens in response to stretch forces in the membrane lipid bilayer. May participate in the regulation of osmotic pressure changes within the cell. The sequence is that of Large-conductance mechanosensitive channel from Burkholderia vietnamiensis (strain G4 / LMG 22486) (Burkholderia cepacia (strain R1808)).